The sequence spans 238 residues: Ribitol-5-phosphate cytidylyltransferase (238 aa).

CTP contacts are provided by residues 7 to 10 (LAGG) and 81 to 87 (GDDRNHT).

It belongs to the IspD/TarI cytidylyltransferase family. TarI subfamily.

It catalyses the reaction D-ribitol 5-phosphate + CTP + H(+) = CDP-L-ribitol + diphosphate. Its pathway is cell wall biogenesis; poly(ribitol phosphate) teichoic acid biosynthesis. In terms of biological role, catalyzes the transfer of the cytidylyl group of CTP to D-ribitol 5-phosphate. The polypeptide is Ribitol-5-phosphate cytidylyltransferase (Staphylococcus epidermidis (strain ATCC 35984 / DSM 28319 / BCRC 17069 / CCUG 31568 / BM 3577 / RP62A)).